The sequence spans 202 residues: Small ribosomal subunit protein uS4c (202 aa).

An S4 RNA-binding domain is found at 90 to 153 (MRLDNVIFRL…KSETIISKNI (64 aa)).

It belongs to the universal ribosomal protein uS4 family. As to quaternary structure, part of the 30S ribosomal subunit. Contacts protein S5. The interaction surface between S4 and S5 is involved in control of translational fidelity.

The protein localises to the plastid. The protein resides in the chloroplast. One of the primary rRNA binding proteins, it binds directly to 16S rRNA where it nucleates assembly of the body of the 30S subunit. Its function is as follows. With S5 and S12 plays an important role in translational accuracy. The chain is Small ribosomal subunit protein uS4c (rps4) from Hylocomium splendens (Glittering wood-moss).